Here is a 196-residue protein sequence, read N- to C-terminus: Hypoxanthine/guanine phosphoribosyltransferase (196 aa).

The protein belongs to the purine/pyrimidine phosphoribosyltransferase family. Archaeal HPRT subfamily. As to quaternary structure, homodimer.

It is found in the cytoplasm. It catalyses the reaction IMP + diphosphate = hypoxanthine + 5-phospho-alpha-D-ribose 1-diphosphate. The catalysed reaction is GMP + diphosphate = guanine + 5-phospho-alpha-D-ribose 1-diphosphate. It functions in the pathway purine metabolism; IMP biosynthesis via salvage pathway; IMP from hypoxanthine: step 1/1. Catalyzes a salvage reaction resulting in the formation of IMP that is energically less costly than de novo synthesis. In Methanocaldococcus sp. (strain FS406-22), this protein is Hypoxanthine/guanine phosphoribosyltransferase.